The following is a 211-amino-acid chain: 2,3-bisphosphoglycerate-dependent phosphoglycerate mutase (211 aa).

Substrate contacts are provided by residues 9–16, 22–23, Arg61, 88–91, Lys99, 115–116, and 159–160; these read RHGQSDWN, TG, ERDY, RR, and GN. The active-site Tele-phosphohistidine intermediate is His10. The Proton donor/acceptor role is filled by Glu88.

It belongs to the phosphoglycerate mutase family. BPG-dependent PGAM subfamily. As to quaternary structure, homodimer.

It catalyses the reaction (2R)-2-phosphoglycerate = (2R)-3-phosphoglycerate. The protein operates within carbohydrate degradation; glycolysis; pyruvate from D-glyceraldehyde 3-phosphate: step 3/5. Its function is as follows. Catalyzes the interconversion of 2-phosphoglycerate and 3-phosphoglycerate. The chain is 2,3-bisphosphoglycerate-dependent phosphoglycerate mutase from Rhizobium etli (strain CIAT 652).